The chain runs to 318 residues: Pyrroline-5-carboxylate reductase ucsG (318 aa).

This sequence belongs to the pyrroline-5-carboxylate reductase family.

Its pathway is mycotoxin biosynthesis. Pyrroline-5-carboxylate reductase; part of the gene cluster that mediates the biosynthesis of UCS1025A, a member of the pyrrolizidinone family that acts as a strong telomerase inhibitor and displays potent antibacterial and antitumor properties. These compounds share a hemiaminal-containing pyrrolizidinone core fused with a gamma-lactone, giving a furopyrrolizidine that is connected to a decalin fragment. The polyketide synthase module (PKS) of the PKS-NRPS ucsA is responsible for the synthesis of the polyketide backbone via the condensation of an acetyl-CoA starter unit with 6 malonyl-CoA units. The downstream nonribosomal peptide synthetase (NRPS) module then amidates the carboxyl end of the polyketide with a 2S,3S-methylproline derived from L-isoleucine by the 2-oxoglutarate-dependent dioxygenase ucsF which converts L-isoleucine to (4S,5S)-4-methylpyrroline-5-carboxylate that is further converted to 2S,3S-methylproline by the pyrroline-5-carboxylate reductase ucsG. Reductive release of the completed aminoacyl polyketide from the assembly line can form the 3-pyrrolin-2-one structure via an intramolecular Knoevenagel reaction. Because ucsA lacks a designated enoylreductase (ER) domain, the required activity is provided the enoyl reductase ucsL. This keto acyclic precursor is the substrate of the Diels-Alderase ucsH, that catalyzes the Diels-Alder cycloaddition. Oxidation of the 3S-methyl group to a carboxylate by the cytochrome P450 monooxygenase ucsK allows an oxa-Michael cyclization that might involve the reductase/dehydrogenase ucsI and which furnishes the furopyrrolizidine. The oxidase ucsJ likely plays a critical role in stereoselective reduction of the C5-C6 double bond to afford the required R-configured carboxylate group. Further enolization and oxidation at C5 by an unidentified enzyme affords the last intermediate that can undergo oxa-Michael cyclization to yield UCS1025A. This Acremonium sp protein is Pyrroline-5-carboxylate reductase ucsG.